A 467-amino-acid polypeptide reads, in one-letter code: UDP-N-acetylmuramoylalanine--D-glutamate ligase (467 aa).

Residue 121–127 coordinates ATP; it reads GTNGKST.

The protein belongs to the MurCDEF family.

It localises to the cytoplasm. The enzyme catalyses UDP-N-acetyl-alpha-D-muramoyl-L-alanine + D-glutamate + ATP = UDP-N-acetyl-alpha-D-muramoyl-L-alanyl-D-glutamate + ADP + phosphate + H(+). The protein operates within cell wall biogenesis; peptidoglycan biosynthesis. Cell wall formation. Catalyzes the addition of glutamate to the nucleotide precursor UDP-N-acetylmuramoyl-L-alanine (UMA). This Brucella suis biovar 1 (strain 1330) protein is UDP-N-acetylmuramoylalanine--D-glutamate ligase.